A 341-amino-acid polypeptide reads, in one-letter code: tRNA N6-adenosine threonylcarbamoyltransferase (341 aa).

Positions 116 and 120 each coordinate Fe cation. Substrate-binding positions include 139 to 143, aspartate 172, glycine 185, and asparagine 274; that span reads LVSGG. A Fe cation-binding site is contributed by aspartate 302.

The protein belongs to the KAE1 / TsaD family. It depends on Fe(2+) as a cofactor.

Its subcellular location is the cytoplasm. It carries out the reaction L-threonylcarbamoyladenylate + adenosine(37) in tRNA = N(6)-L-threonylcarbamoyladenosine(37) in tRNA + AMP + H(+). Its function is as follows. Required for the formation of a threonylcarbamoyl group on adenosine at position 37 (t(6)A37) in tRNAs that read codons beginning with adenine. Is involved in the transfer of the threonylcarbamoyl moiety of threonylcarbamoyl-AMP (TC-AMP) to the N6 group of A37, together with TsaE and TsaB. TsaD likely plays a direct catalytic role in this reaction. The polypeptide is tRNA N6-adenosine threonylcarbamoyltransferase (Vesicomyosocius okutanii subsp. Calyptogena okutanii (strain HA)).